Consider the following 194-residue polypeptide: DNA replication complex GINS protein PSF3 (194 aa).

Belongs to the GINS3/PSF3 family. In terms of assembly, component of the GINS complex which is a heterotetramer of SLD5, PSF1, PSF2 and PSF3.

It localises to the nucleus. Functionally, functions as part of the GINS complex which plays an essential role in the initiation of DNA replication by binding to DNA replication origins and facilitating the assembly of the DNA replication machinery. This Saccharomyces cerevisiae (strain ATCC 204508 / S288c) (Baker's yeast) protein is DNA replication complex GINS protein PSF3.